The primary structure comprises 70 residues: Cold shock-like protein CspB (70 aa).

Positions 7 to 67 (GLVKWFDAGK…GQKGPSAVNV (61 aa)) constitute a CSD domain.

It localises to the cytoplasm. The chain is Cold shock-like protein CspB (cspB) from Yersinia enterocolitica.